A 532-amino-acid chain; its full sequence is Copalyl diphosphate synthase (532 aa).

The short motif at 313–318 (DTDDTA) is the DXDDTA motif element. The QXXDGSW motif motif lies at 443-449 (QSDDGSW).

Belongs to the terpene synthase family. Mg(2+) serves as cofactor.

The catalysed reaction is (2E,6E,10E)-geranylgeranyl diphosphate = (+)-copalyl diphosphate. In terms of biological role, involved in the biosynthesis of the mercapturic acid derivative diterpene cyslabdan A, a potentiator of the beta-lactam antibiotic imipenem. Catalyzes the conversion of geranylgeranyl diphosphate (GGDP) into (+)-copalyl diphosphate. This Streptomyces cyslabdanicus protein is Copalyl diphosphate synthase.